A 510-amino-acid chain; its full sequence is MGLLSDVINNFLPETPLAWAALILASFTLYSVQLVVRRLYFHPLSKIPGPFLARSRYWYEFYQDIILGGIYVKNYAALHEKYGPVLRASPDRVHVSDPDFFHEVYSSGSKYMKDPAFFQAAGGIPEALPAIVDVEYHRRRRKLINDLFSAKSMEALSHLVLKVVQNALSKAHEHHEANKVLDIQRLYTGITIDTIMQVLCDRTLNFIDAKEEEEPPFLATLRTFSENFFLLKHFPILIWMALNIPKSIAQKLIPGEFEFRASINQWIRDRASEHELGVEKAEDGRKTVIDLLLRPEDGGRPLTHQAVEDETYSFAFAGTHTTSHTMSMGTYYLLSHPAKLQKLRDELKPIPKNDQGLYEYKTVRSLPYLNACIKESLRMSSPVPGILPRLVPAEGMTWRGHYLPPGTSVSSSIYSVHTDPNIFPNPEQFIPERWLANENLDHYLVVFGKGSRACIGLNVAWMETYLTFSNFFTSLNMTLFETNEQSTDWTDCGNAMIKKHVRVKVDSLAS.

The helical transmembrane segment at 16 to 36 (PLAWAALILASFTLYSVQLVV) threads the bilayer. C454 contributes to the heme binding site. N476 carries an N-linked (GlcNAc...) asparagine glycan.

This sequence belongs to the cytochrome P450 family. It depends on heme as a cofactor.

Its subcellular location is the membrane. It participates in secondary metabolite biosynthesis. In terms of biological role, cytochrome P450 monooxygenase; part of the gene cluster that mediates the biosynthesis of botrydial. Botrydial is necessary for colonization of plant tissue by the T4 strain. It is a strain-dependent virulence factor since highly aggressive strains like SAS56 or B05 still retain substantial virulence when botrydial synthesis is impaired, since they produce also botcinic acid. The first step of botrydial biosynthesis is performed by the sesquiterpene synthase BOT2 which catalyzes the cyclization of farnesyl diphosphate (FPP) to presilphiperfolan-8-beta-ol (PSP). The cytochrome P450 monooxygenase BOT4 then catalyzes the hydroxylation at C-4 to give a probotryane intermediate. Acetylation of the hydroxyl at C-4 is carried out by the acetyltransferase BOT5, followed by the combined action of the P450 monooxygenases BOT3 and BOT1, to yield finally the glycol, via the regio- and stereospecific hydroxylations at C-10 and C-15 of the probotryane intermediates, respectively. The cleavage of the C10-C15 bond of probotryane skeleton is an intriguing and chemically important reaction, which could be mediated by some of the monooxygenases or by a combination of them. It is possible that either BOT3 or BOT1 would oxidize either the 10- or the 15-hydroxy group to the hydroperoxide derivative, which would then undergo heterolytic fragmentation to give the dialdehyde botrydial. Finally, the dehydrogenase BOT7 might be involved in the conversion of botrydial to dihydrobotrydial. The protein is Cytochrome P450 monooxygenase BOT1 of Botryotinia fuckeliana (Noble rot fungus).